The following is a 398-amino-acid chain: Succinate--CoA ligase [ADP-forming] subunit beta (398 aa).

Residues 9 to 254 (KRLLHTYGAP…LSEEDEKEIE (246 aa)) form the ATP-grasp domain. ATP is bound by residues K46, 53-55 (GRG), E109, A112, and E117. Mg(2+) is bound by residues N209 and D223. Substrate is bound by residues N274 and 331 to 333 (GIM).

Belongs to the succinate/malate CoA ligase beta subunit family. In terms of assembly, heterotetramer of two alpha and two beta subunits. Mg(2+) serves as cofactor.

The enzyme catalyses succinate + ATP + CoA = succinyl-CoA + ADP + phosphate. It catalyses the reaction GTP + succinate + CoA = succinyl-CoA + GDP + phosphate. Its pathway is carbohydrate metabolism; tricarboxylic acid cycle; succinate from succinyl-CoA (ligase route): step 1/1. Its function is as follows. Succinyl-CoA synthetase functions in the citric acid cycle (TCA), coupling the hydrolysis of succinyl-CoA to the synthesis of either ATP or GTP and thus represents the only step of substrate-level phosphorylation in the TCA. The beta subunit provides nucleotide specificity of the enzyme and binds the substrate succinate, while the binding sites for coenzyme A and phosphate are found in the alpha subunit. This Brucella anthropi (strain ATCC 49188 / DSM 6882 / CCUG 24695 / JCM 21032 / LMG 3331 / NBRC 15819 / NCTC 12168 / Alc 37) (Ochrobactrum anthropi) protein is Succinate--CoA ligase [ADP-forming] subunit beta.